We begin with the raw amino-acid sequence, 121 residues long: NADH-quinone oxidoreductase subunit A 1 (121 aa).

A run of 3 helical transmembrane segments spans residues 6–26 (FPIF…LSIG), 62–82 (LVAM…PWAV), and 90–110 (FYGL…YYYI).

Belongs to the complex I subunit 3 family. As to quaternary structure, NDH-1 is composed of 14 different subunits. Subunits NuoA, H, J, K, L, M, N constitute the membrane sector of the complex.

The protein resides in the cell inner membrane. The catalysed reaction is a quinone + NADH + 5 H(+)(in) = a quinol + NAD(+) + 4 H(+)(out). In terms of biological role, NDH-1 shuttles electrons from NADH, via FMN and iron-sulfur (Fe-S) centers, to quinones in the respiratory chain. The immediate electron acceptor for the enzyme in this species is believed to be a menaquinone. Couples the redox reaction to proton translocation (for every two electrons transferred, four hydrogen ions are translocated across the cytoplasmic membrane), and thus conserves the redox energy in a proton gradient. In Chloroherpeton thalassium (strain ATCC 35110 / GB-78), this protein is NADH-quinone oxidoreductase subunit A 1.